The chain runs to 228 residues: DNA repair protein RecO (228 aa).

Belongs to the RecO family.

Functionally, involved in DNA repair and RecF pathway recombination. This chain is DNA repair protein RecO, found in Mannheimia succiniciproducens (strain KCTC 0769BP / MBEL55E).